A 219-amino-acid polypeptide reads, in one-letter code: Proteasome subunit beta 2 (219 aa).

A propeptide spans 1–25 (MAEWIAGGLEGPAGRGLDERVVRSG) (removed in mature form; by autocatalysis). Residue Thr26 is the Nucleophile of the active site.

It belongs to the peptidase T1B family. In terms of assembly, the 20S proteasome core is composed of 14 alpha and 14 beta subunits that assemble into four stacked heptameric rings, resulting in a barrel-shaped structure. The two inner rings, each composed of seven catalytic beta subunits, are sandwiched by two outer rings, each composed of seven alpha subunits. The catalytic chamber with the active sites is on the inside of the barrel. Has a gated structure, the ends of the cylinder being occluded by the N-termini of the alpha-subunits. Is capped at one or both ends by the proteasome regulatory ATPase, PAN.

It localises to the cytoplasm. The catalysed reaction is Cleavage of peptide bonds with very broad specificity.. Its activity is regulated as follows. The formation of the proteasomal ATPase PAN-20S proteasome complex, via the docking of the C-termini of PAN into the intersubunit pockets in the alpha-rings, triggers opening of the gate for substrate entry. Interconversion between the open-gate and close-gate conformations leads to a dynamic regulation of the 20S proteasome proteolysis activity. Component of the proteasome core, a large protease complex with broad specificity involved in protein degradation. The sequence is that of Proteasome subunit beta 2 from Aeropyrum pernix (strain ATCC 700893 / DSM 11879 / JCM 9820 / NBRC 100138 / K1).